Reading from the N-terminus, the 349-residue chain is tRNA pseudouridine synthase D (349 aa).

Substrate is bound at residue phenylalanine 27. Aspartate 80 functions as the Nucleophile in the catalytic mechanism. Asparagine 129 serves as a coordination point for substrate. The region spanning 155 to 303 is the TRUD domain; it reads GVPNYFGAQR…VEAARRAMLL (149 aa). Phenylalanine 329 contributes to the substrate binding site.

The protein belongs to the pseudouridine synthase TruD family.

It carries out the reaction uridine(13) in tRNA = pseudouridine(13) in tRNA. In terms of biological role, responsible for synthesis of pseudouridine from uracil-13 in transfer RNAs. This is tRNA pseudouridine synthase D from Escherichia coli O8 (strain IAI1).